The chain runs to 63 residues: Large ribosomal subunit protein uL29 (63 aa).

It belongs to the universal ribosomal protein uL29 family.

The protein is Large ribosomal subunit protein uL29 of Mannheimia succiniciproducens (strain KCTC 0769BP / MBEL55E).